Here is a 55-residue protein sequence, read N- to C-terminus: ATP synthase F(0) complex subunit 8 (55 aa).

Residues 4–24 (LLPTPWFTIFIYAWMVLLAVI) form a helical membrane-spanning segment.

This sequence belongs to the ATPase protein 8 family. As to quaternary structure, component of the ATP synthase complex composed at least of ATP5F1A/subunit alpha, ATP5F1B/subunit beta, ATP5MC1/subunit c (homooctomer), MT-ATP6/subunit a, MT-ATP8/subunit 8, ATP5ME/subunit e, ATP5MF/subunit f, ATP5MG/subunit g, ATP5MK/subunit k, ATP5MJ/subunit j, ATP5F1C/subunit gamma, ATP5F1D/subunit delta, ATP5F1E/subunit epsilon, ATP5PF/subunit F6, ATP5PB/subunit b, ATP5PD/subunit d, ATP5PO/subunit OSCP. ATP synthase complex consists of a soluble F(1) head domain (subunits alpha(3) and beta(3)) - the catalytic core - and a membrane F(0) domain - the membrane proton channel (subunits c, a, 8, e, f, g, k and j). These two domains are linked by a central stalk (subunits gamma, delta, and epsilon) rotating inside the F1 region and a stationary peripheral stalk (subunits F6, b, d, and OSCP).

It localises to the mitochondrion membrane. Its function is as follows. Subunit 8, of the mitochondrial membrane ATP synthase complex (F(1)F(0) ATP synthase or Complex V) that produces ATP from ADP in the presence of a proton gradient across the membrane which is generated by electron transport complexes of the respiratory chain. ATP synthase complex consist of a soluble F(1) head domain - the catalytic core - and a membrane F(1) domain - the membrane proton channel. These two domains are linked by a central stalk rotating inside the F(1) region and a stationary peripheral stalk. During catalysis, ATP synthesis in the catalytic domain of F(1) is coupled via a rotary mechanism of the central stalk subunits to proton translocation. In vivo, can only synthesize ATP although its ATP hydrolase activity can be activated artificially in vitro. Part of the complex F(0) domain. The protein is ATP synthase F(0) complex subunit 8 of Dicentrarchus labrax (European seabass).